The primary structure comprises 70 residues: DNA gyrase inhibitor YacG (70 aa).

Zn(2+)-binding residues include Cys-9, Cys-12, Cys-28, and Cys-32. The interval 44–70 is disordered; that stretch reads SRKIPGSSIDPESIVTTNNKQDNVDEQ.

It belongs to the DNA gyrase inhibitor YacG family. Interacts with GyrB. Zn(2+) is required as a cofactor.

Inhibits all the catalytic activities of DNA gyrase by preventing its interaction with DNA. Acts by binding directly to the C-terminal domain of GyrB, which probably disrupts DNA binding by the gyrase. In Legionella pneumophila subsp. pneumophila (strain Philadelphia 1 / ATCC 33152 / DSM 7513), this protein is DNA gyrase inhibitor YacG.